Consider the following 132-residue polypeptide: Small ribosomal subunit protein uS8c (132 aa).

Belongs to the universal ribosomal protein uS8 family. As to quaternary structure, part of the 30S ribosomal subunit.

The protein resides in the plastid. The protein localises to the chloroplast. Its function is as follows. One of the primary rRNA binding proteins, it binds directly to 16S rRNA central domain where it helps coordinate assembly of the platform of the 30S subunit. In Cycas taitungensis (Prince sago), this protein is Small ribosomal subunit protein uS8c (rps8).